A 294-amino-acid polypeptide reads, in one-letter code: G-protein coupled receptor homolog U51 (294 aa).

The Extracellular portion of the chain corresponds to 1-14 (MKNIDLTNWKLLAE). Residues 15–35 (IYEYLFFFSFFFLCLLVIIVV) traverse the membrane as a helical segment. Over 36 to 47 (KFNNSTVGREYT) the chain is Cytoplasmic. The chain crosses the membrane as a helical span at residues 48-68 (FSTFSGMLVYILLLPVKMGML). Topologically, residues 69–79 (TKMWDVSTDYC) are extracellular. Residues 80 to 102 (IILMFLSDFSFIFSSWALTLLAL) form a helical membrane-spanning segment. Residues 103 to 119 (ERINNFSFSEIKVNETK) are Cytoplasmic-facing. The helical transmembrane segment at 120–140 (ILKQMSFPIIWVTSIFQAVQI) threads the bilayer. Over 141–166 (SMKYKKSQMNLEDDYCLLAIERSAEE) the chain is Extracellular. Residues 167-187 (AWILLMYTVVIPTFIVFFYVL) traverse the membrane as a helical segment. The Cytoplasmic portion of the chain corresponds to 188 to 200 (NKRFLFLERDLNS). A helical transmembrane segment spans residues 201–221 (IVTHLSLFLFFGALCFFPASV). The Extracellular segment spans residues 222–236 (LNEFNCNRLFYGLHE). A helical transmembrane segment spans residues 237–257 (LLIVCLELKIFYVPTMTYIIS). Over 258–294 (CENYRLAAKAFFCKCFKPCFLMPSLRKLQQPTKSTQF) the chain is Cytoplasmic.

This sequence belongs to the G-protein coupled receptor 1 family.

The protein resides in the host cell membrane. This chain is G-protein coupled receptor homolog U51 (U51), found in Human herpesvirus 7 (strain JI) (HHV-7).